A 48-amino-acid polypeptide reads, in one-letter code: Mating-type pheromone BAP1(2) (48 aa).

Cysteine 45 is modified (cysteine methyl ester). The S-farnesyl cysteine moiety is linked to residue cysteine 45. The propeptide at valine 46–glycine 48 is removed in mature form.

It is found in the cell membrane. In terms of biological role, activates B-regulated development. The polypeptide is Mating-type pheromone BAP1(2) (BAP1(2)) (Schizophyllum commune (Split gill fungus)).